Consider the following 472-residue polypeptide: Probable low-salt glycan biosynthesis flippase Agl15 (472 aa).

The next 13 membrane-spanning stretches (helical) occupy residues 8–28 (IKLFIANIFGAGLQFLGITFF), 38–58 (GVFFLFQALLGIVAIPADFGL), 77–97 (SSAIILKLIPISLIILSIVVF), 109–129 (FAVYLALAIILQETAQLAVSV), 164–184 (AEALIYSLLAGMVVTLAWGLS), 209–229 (VVSSIGGYFYSWMDVAIIGIF), 244–264 (VTAITMLFSQAVASTIFPQVS), 289–309 (LVIPAFFGILVFSDEIMGIVF), 315–335 (IASYVLIILAGEKILQSVHVI), 354–374 (VISVVLNLILNVILILSFGIV), 375–395 (GAAVATALSFAVNTVLHAHYL), 408–428 (IGWCTVSSLIMAGVLFGFKTL), and 434–454 (LIQLFIGIFFGMLVYTTITLL).

Belongs to the AglR/Agl15 family.

It is found in the cell membrane. The protein operates within protein modification; protein glycosylation. Its pathway is cell surface structure biogenesis; S-layer biogenesis. Its function is as follows. Flippase involved in N-glycan biosynthetic pathway that takes place under low-salt conditions (1.75 M instead of 3.4 M). Participates in the formation of the tetrasaccharide present at 'Asn-532' of S-layer glycoprotein Csg, consisting of a sulfated hexose, 2 hexoses and rhamnose. Probably moves the tetrasaccharide from the cytosolic to the extracytosolic side of the membrane. This chain is Probable low-salt glycan biosynthesis flippase Agl15 (agl15), found in Haloferax volcanii (strain ATCC 29605 / DSM 3757 / JCM 8879 / NBRC 14742 / NCIMB 2012 / VKM B-1768 / DS2) (Halobacterium volcanii).